A 993-amino-acid polypeptide reads, in one-letter code: Serine/threonine-protein phosphatase 6 regulatory ankyrin repeat subunit B (993 aa).

ANK repeat units lie at residues Thr-7 to Thr-36, Glu-40 to Ala-69, Met-73 to Ala-102, Asn-106 to Val-135, Gly-139 to Ala-168, Lys-172 to Cys-201, Lys-205 to Glu-234, Tyr-238 to Gln-267, Asn-271 to Ile-301, Asp-305 to Cys-334, Asp-338 to Lys-367, His-371 to Thr-400, Phe-404 to Lys-433, Cys-437 to Glu-466, Trp-470 to Glu-498, Glu-531 to Glu-561, Ala-566 to Ile-595, Lys-599 to Val-628, Thr-633 to Ala-662, Lys-669 to Thr-698, Leu-702 to Cys-731, Arg-735 to Asp-764, Gln-771 to Phe-800, Asn-803 to Val-832, Lys-838 to Ala-867, Ser-871 to Val-901, Asp-905 to Leu-934, and Ala-941 to Ala-970.

Protein phosphatase 6 (PP6) holoenzyme is proposed to be a heterotrimeric complex formed by the catalytic subunit, a SAPS domain-containing subunit (PP6R) and an ankyrin repeat-domain containing regulatory subunit (ARS). Interacts with PPP6R1.

Functionally, putative regulatory subunit of protein phosphatase 6 (PP6) that may be involved in the recognition of phosphoprotein substrates. The sequence is that of Serine/threonine-protein phosphatase 6 regulatory ankyrin repeat subunit B (ANKRD44) from Homo sapiens (Human).